The chain runs to 920 residues: Translation initiation factor IF-2 (920 aa).

Basic and acidic residues-rich tracts occupy residues E149–V175, A186–K197, and A255–K265. Disordered regions lie at residues E149–K197 and E245–Q319. The span at S301–G311 shows a compositional bias: gly residues. Residues P418–E585 form the tr-type G domain. The interval G427–T434 is G1. Position 427 to 434 (G427 to T434) interacts with GTP. The segment at G452–H456 is G2. Positions D473 to G476 are G3. Residues D473 to H477 and N527 to D530 contribute to the GTP site. Residues N527–D530 are G4. The G5 stretch occupies residues S563–K565.

The protein belongs to the TRAFAC class translation factor GTPase superfamily. Classic translation factor GTPase family. IF-2 subfamily.

It localises to the cytoplasm. Functionally, one of the essential components for the initiation of protein synthesis. Protects formylmethionyl-tRNA from spontaneous hydrolysis and promotes its binding to the 30S ribosomal subunits. Also involved in the hydrolysis of GTP during the formation of the 70S ribosomal complex. The chain is Translation initiation factor IF-2 from Polynucleobacter asymbioticus (strain DSM 18221 / CIP 109841 / QLW-P1DMWA-1) (Polynucleobacter necessarius subsp. asymbioticus).